Consider the following 446-residue polypeptide: Histidine--tRNA ligase (446 aa).

The disordered stretch occupies residues 403–422 (TASVKPLRGTGDDGEKSVQQ).

The protein belongs to the class-II aminoacyl-tRNA synthetase family. In terms of assembly, homodimer.

The protein resides in the cytoplasm. The enzyme catalyses tRNA(His) + L-histidine + ATP = L-histidyl-tRNA(His) + AMP + diphosphate + H(+). The protein is Histidine--tRNA ligase of Burkholderia thailandensis (strain ATCC 700388 / DSM 13276 / CCUG 48851 / CIP 106301 / E264).